A 2101-amino-acid chain; its full sequence is General transcription factor 3C polypeptide 1 (2101 aa).

Acidic residues predominate over residues 473–487 (GEEAFLSDSESEEES). Disordered stretches follow at residues 473–574 (GEEA…MDSH) and 588–609 (NPKE…DKPH). The span at 492-503 (GKRRGRGSRGHA) shows a compositional bias: basic residues. Residues 504-513 (RASGDAGSGS) are compositionally biased toward low complexity. K534 participates in a covalent cross-link: Glycyl lysine isopeptide (Lys-Gly) (interchain with G-Cter in SUMO2). The residue at position 667 (S667) is a Phosphoserine. 2 disordered regions span residues 718–772 (STAN…EKMG) and 820–864 (GEQP…SSWE). The span at 747–759 (RSANSDPNTSSKP) shows a compositional bias: polar residues. Basic and acidic residues-rich tracts occupy residues 760-771 (ESTRVKKTDEKM) and 826-836 (HSERKTGKQES). Glycyl lysine isopeptide (Lys-Gly) (interchain with G-Cter in SUMO2) cross-links involve residues K770 and K833. S1063 is modified (phosphoserine). Positions 1186-1196 (EEQFELDREPT) are enriched in basic and acidic residues. 3 disordered regions span residues 1186-1239 (EEQF…KKLR), 1598-1627 (KSLG…QGVE), and 1822-1923 (DTKA…QENQ). Position 1196 is a phosphothreonine (T1196). Residues 1199–1215 (RNRKVRGGKSQKRKRLK) are compositionally biased toward basic residues. Over residues 1229-1239 (EHPEAKSKKLR) the composition is skewed to basic and acidic residues. The segment covering 1606–1617 (LDDDEEEEDLDE) has biased composition (acidic residues). The span at 1822 to 1831 (DTKASGDDSQ) shows a compositional bias: basic and acidic residues. Phosphoserine is present on residues S1854 and S1890. Positions 1900-1910 (EAQAPAQLAAP) are enriched in low complexity.

The protein belongs to the TFIIIC subunit 1 family. In terms of assembly, part of the TFIIIC subcomplex TFIIIC2, consisting of six subunits, GTF3C1, GTF3C2, GTF3C3, GTF3C4, GTF3C5 and GTF3C6. Interacts with IGHMBP2. Interacts with MAF1.

The protein localises to the nucleus. Required for RNA polymerase III-mediated transcription. Component of TFIIIC that initiates transcription complex assembly on tRNA and is required for transcription of 5S rRNA and other stable nuclear and cytoplasmic RNAs. Binds to the box B promoter element. This Mus musculus (Mouse) protein is General transcription factor 3C polypeptide 1 (Gtf3c1).